We begin with the raw amino-acid sequence, 179 residues long: Small ribosomal subunit protein uS5 (179 aa).

The region spanning 13–76 is the S5 DRBM domain; the sequence is LDERVVLINR…EAAKRNLIRV (64 aa). A disordered region spans residues 160-179; sequence DMTPQELNARRMRRETTEAA.

This sequence belongs to the universal ribosomal protein uS5 family. Part of the 30S ribosomal subunit. Contacts proteins S4 and S8.

In terms of biological role, with S4 and S12 plays an important role in translational accuracy. Located at the back of the 30S subunit body where it stabilizes the conformation of the head with respect to the body. This Chloroflexus aggregans (strain MD-66 / DSM 9485) protein is Small ribosomal subunit protein uS5.